The chain runs to 384 residues: Sphingosine kinase 1 (384 aa).

In terms of domain architecture, DAGKc spans 12-159 (PRPCRVLVLL…MNLLSLHTAS (148 aa)). Residues 22 to 24 (NPR) and 54 to 58 (TERRN) contribute to the ATP site. 79–82 (SGDG) serves as a coordination point for substrate. The active-site Proton donor/acceptor is D81. ATP is bound by residues E86 and 111–113 (GSG). Short sequence motifs (nuclear export signal) lie at residues 147-155 (LSPMNLLSL) and 161-169 (LRLFSVLSL). D178 lines the substrate pocket. Positions 185 and 191 each coordinate ATP. A Phosphothreonine modification is found at T193. A Phosphoserine modification is found at S225. 341–343 (DGE) lines the ATP pocket.

Interacts with ACY1. Binds to calmodulin. Interacts with SPHKAP. Interacts with CIB1, the interaction occurs in a calcium-dependent manner. Interacts with TRAF2. Interacts with EEF1A1; the interaction enhances SPHK1 kinase activity. Requires Mg(2+) as cofactor. Widely expressed with highest levels in adult liver, kidney, heart and skeletal muscle. Expressed in brain cortex (at protein level).

It localises to the cytoplasm. The protein resides in the nucleus. The protein localises to the cell membrane. It is found in the endosome membrane. Its subcellular location is the membrane. It localises to the clathrin-coated pit. The protein resides in the synapse. The catalysed reaction is a sphingoid base + ATP = a sphingoid 1-phosphate + ADP + H(+). It catalyses the reaction L-seryl-[protein] + acetyl-CoA = O-acetyl-L-seryl-[protein] + CoA. The enzyme catalyses sphinganine + ATP = sphinganine 1-phosphate + ADP + H(+). It carries out the reaction sphing-4-enine + ATP = sphing-4-enine 1-phosphate + ADP + H(+). The catalysed reaction is 1-O-hexadecyl-2-amino-sn-glycerol + ATP = 1-O-hexadecyl-2-desoxy-2-amino-sn-glycero-3-phosphate + ADP + H(+). Its activity is regulated as follows. Acetyltransferase activity increases in presence of the kinase substrate, sphingosine. In Purkinje cells, kinase activity on sphingosine increases in presence of VEGFA. In neurons, kinase activity increases during the first 24h in presence of Amyloid-beta protein 42 to decrease after 96h. Its function is as follows. Catalyzes the phosphorylation of sphingosine to form sphingosine 1-phosphate (SPP), a lipid mediator with both intra- and extracellular functions. Also acts on D-erythro-sphingosine and to a lesser extent sphinganine, but not other lipids, such as D,L-threo-dihydrosphingosine, N,N-dimethylsphingosine, diacylglycerol, ceramide, or phosphatidylinositol. In contrast to proapoptotic SPHK2, has a negative effect on intracellular ceramide levels, enhances cell growth and inhibits apoptosis. Involved in the regulation of inflammatory response and neuroinflammation. Via the product sphingosine 1-phosphate, stimulates TRAF2 E3 ubiquitin ligase activity, and promotes activation of NF-kappa-B in response to TNF signaling leading to IL17 secretion. In response to TNF and in parallel to NF-kappa-B activation, negatively regulates RANTES induction through p38 MAPK signaling pathway. Involved in endocytic membrane trafficking induced by sphingosine, recruited to dilate endosomes, also plays a role on later stages of endosomal maturation and membrane fusion independently of its kinase activity. In Purkinje cells, seems to be also involved in the regulation of autophagosome-lysosome fusion upon VEGFA. Has serine acetyltransferase activity on PTGS2/COX2 in an acetyl-CoA dependent manner. The acetyltransferase activity increases in presence of the kinase substrate, sphingosine. During neuroinflammation, through PTGS2 acetylation, promotes neuronal secretion of specialized preresolving mediators (SPMs), especially 15-R-lipoxin A4, which results in an increase of phagocytic microglia. The protein is Sphingosine kinase 1 of Homo sapiens (Human).